Reading from the N-terminus, the 210-residue chain is uncharacterized protein (210 aa).

The N-terminal stretch at M1–G17 is a signal peptide. C18 carries the N-palmitoyl cysteine lipid modification. Residue C18 is the site of S-diacylglycerol cysteine attachment. Residues E176–E195 show a composition bias toward polar residues. Positions E176–R210 are disordered. The span at T196–R210 shows a compositional bias: basic and acidic residues.

Its subcellular location is the cell membrane. This is an uncharacterized protein from Bacillus subtilis (strain 168).